We begin with the raw amino-acid sequence, 78 residues long: ATP synthase subunit c (78 aa).

2 helical membrane passes run 9 to 29 (AFIGAGLAMIAILGVGIGQGW) and 56 to 76 (AAVTETGALYCFIIAILLVFV).

Belongs to the ATPase C chain family. F-type ATPases have 2 components, F(1) - the catalytic core - and F(0) - the membrane proton channel. F(1) has five subunits: alpha(3), beta(3), gamma(1), delta(1), epsilon(1). F(0) has three main subunits: a(1), b(2) and c(10-14). The alpha and beta chains form an alternating ring which encloses part of the gamma chain. F(1) is attached to F(0) by a central stalk formed by the gamma and epsilon chains, while a peripheral stalk is formed by the delta and b chains.

The protein resides in the cell membrane. In terms of biological role, f(1)F(0) ATP synthase produces ATP from ADP in the presence of a proton or sodium gradient. F-type ATPases consist of two structural domains, F(1) containing the extramembraneous catalytic core and F(0) containing the membrane proton channel, linked together by a central stalk and a peripheral stalk. During catalysis, ATP synthesis in the catalytic domain of F(1) is coupled via a rotary mechanism of the central stalk subunits to proton translocation. Functionally, key component of the F(0) channel; it plays a direct role in translocation across the membrane. A homomeric c-ring of between 10-14 subunits forms the central stalk rotor element with the F(1) delta and epsilon subunits. In Malacoplasma penetrans (strain HF-2) (Mycoplasma penetrans), this protein is ATP synthase subunit c.